The primary structure comprises 158 residues: MESIYDFVVQKNNGESYKLEQYKGDVMLIVNTASECGFTPQFEGLQKLYDEYKDQRFIILGFPCNQFGGQEPGSGEEAAQNCKINYGVTFPIHEKVDVKGDNQHPLFHFLTNAAKGMINEKIKWNFTKFLIDREGNVIKRFSPQKKPEQIKTEIEKLL.

Cys-36 is a catalytic residue.

Belongs to the glutathione peroxidase family.

This is Glutathione peroxidase homolog BsaA (bsaA) from Staphylococcus epidermidis (strain ATCC 12228 / FDA PCI 1200).